The chain runs to 129 residues: Small ribosomal subunit protein uS11c (129 aa).

Belongs to the universal ribosomal protein uS11 family. As to quaternary structure, part of the 30S ribosomal subunit.

It localises to the plastid. The protein resides in the chloroplast. In Cyanidium caldarium (Red alga), this protein is Small ribosomal subunit protein uS11c.